A 1147-amino-acid polypeptide reads, in one-letter code: PDZ domain-containing protein 8 (1147 aa).

The chain crosses the membrane as a helical span at residues Gly-2–Leu-24. The region spanning Ala-87–Pro-293 is the SMP-LTD domain. The 84-residue stretch at Thr-365 to Ala-448 folds into the PDZ domain. Ser-490, Ser-515, and Ser-532 each carry phosphoserine. The interval Glu-504–Glu-673 is disordered. Residues Gln-510–Ser-524 show a composition bias toward polar residues. The segment covering Lys-557 to Gln-576 has biased composition (polar residues). The segment covering Phe-580 to Pro-596 has biased composition (pro residues). A Phorbol-ester/DAG-type zinc finger spans residues Lys-833–Cys-884. The tract at residues Arg-948–Ala-990 is disordered. 2 positions are modified to phosphoserine: Ser-960 and Ser-973. Polar residues predominate over residues Cys-978–Gly-987. Positions Pro-1021–Glu-1056 form a coiled coil. Positions Gln-1126–Ser-1137 are enriched in polar residues. Residues Gln-1126 to Val-1147 are disordered.

In terms of assembly, interacts with MSN.

The protein localises to the endoplasmic reticulum membrane. Functionally, molecular tethering protein that connects endoplasmic reticulum and mitochondria membranes. PDZD8-dependent endoplasmic reticulum-mitochondria membrane tethering is essential for endoplasmic reticulum-mitochondria Ca(2+) transfer. In neurons, involved in the regulation of dendritic Ca(2+) dynamics by regulating mitochondrial Ca(2+) uptake in neurons. The sequence is that of PDZ domain-containing protein 8 from Mus musculus (Mouse).